Consider the following 777-residue polypeptide: Zinc finger FYVE domain-containing protein 1 (777 aa).

The interval 416-777 (MAHSSFFPDE…FNCNKKPGDL (362 aa)) is required for localization in the lipid droplets. 2 consecutive FYVE-type zinc fingers follow at residues 598–659 (NSQI…DARN) and 715–775 (DHEI…KKPG). Positions 604, 607, 620, 623, 628, 631, 651, 654, 721, 724, 737, 740, 745, 748, 767, and 770 each coordinate Zn(2+).

As to quaternary structure, interacts with RAB18 (in GTP-bound form). Interacts with BSCL2 in a RAB18-dependent manner. Interacts with ZW10. Ubiquitous.

It is found in the golgi apparatus. It localises to the golgi stack. The protein localises to the endoplasmic reticulum. The protein resides in the preautophagosomal structure. Its subcellular location is the lipid droplet. It is found in the mitochondrion. Its function is as follows. Plays a role in the formation of lipid droplets (LDs) which are storage organelles at the center of lipid and energy homeostasis. Regulates the morphology, size and distribution of LDs. Mediates the formation of endoplasmic reticulum-lipid droplets (ER-LD) contact sites by forming a complex with RAB18 and ZW10. Binds to phosphatidylinositol 3-phosphate (PtdIns3P) through FYVE-type zinc finger. The polypeptide is Zinc finger FYVE domain-containing protein 1 (Zfyve1) (Mus musculus (Mouse)).